We begin with the raw amino-acid sequence, 432 residues long: Glutamate-1-semialdehyde 2,1-aminomutase 1 (432 aa).

Residue Lys268 is modified to N6-(pyridoxal phosphate)lysine.

It belongs to the class-III pyridoxal-phosphate-dependent aminotransferase family. HemL subfamily. In terms of assembly, homodimer. Pyridoxal 5'-phosphate is required as a cofactor.

Its subcellular location is the cytoplasm. It catalyses the reaction (S)-4-amino-5-oxopentanoate = 5-aminolevulinate. It participates in porphyrin-containing compound metabolism; protoporphyrin-IX biosynthesis; 5-aminolevulinate from L-glutamyl-tRNA(Glu): step 2/2. This chain is Glutamate-1-semialdehyde 2,1-aminomutase 1, found in Bacillus cereus (strain ZK / E33L).